The following is a 63-amino-acid chain: Cytochrome c oxidase subunit 7C, mitochondrial (63 aa).

Residues 1 to 16 (MLGQSIRRFTTSVVRR) constitute a mitochondrion transit peptide. The Mitochondrial matrix portion of the chain corresponds to 17-33 (SHYEEGPGKNLPFSVEN). At lysine 25 the chain carries N6-acetyllysine; alternate. Lysine 25 carries the N6-succinyllysine; alternate modification. The helical transmembrane segment at 34–60 (KWRLLLMMTVYFGSGFAAPFFIVRHQL) threads the bilayer. The Mitochondrial intermembrane segment spans residues 61–63 (LKK).

This sequence belongs to the cytochrome c oxidase VIIc family. In terms of assembly, component of the cytochrome c oxidase (complex IV, CIV), a multisubunit enzyme composed of 14 subunits. The complex is composed of a catalytic core of 3 subunits MT-CO1, MT-CO2 and MT-CO3, encoded in the mitochondrial DNA, and 11 supernumerary subunits COX4I, COX5A, COX5B, COX6A, COX6B, COX6C, COX7A, COX7B, COX7C, COX8 and NDUFA4, which are encoded in the nuclear genome. The complex exists as a monomer or a dimer and forms supercomplexes (SCs) in the inner mitochondrial membrane with NADH-ubiquinone oxidoreductase (complex I, CI) and ubiquinol-cytochrome c oxidoreductase (cytochrome b-c1 complex, complex III, CIII), resulting in different assemblies (supercomplex SCI(1)III(2)IV(1) and megacomplex MCI(2)III(2)IV(2)). Interacts with RAB5IF.

The protein localises to the mitochondrion inner membrane. It participates in energy metabolism; oxidative phosphorylation. Its function is as follows. Component of the cytochrome c oxidase, the last enzyme in the mitochondrial electron transport chain which drives oxidative phosphorylation. The respiratory chain contains 3 multisubunit complexes succinate dehydrogenase (complex II, CII), ubiquinol-cytochrome c oxidoreductase (cytochrome b-c1 complex, complex III, CIII) and cytochrome c oxidase (complex IV, CIV), that cooperate to transfer electrons derived from NADH and succinate to molecular oxygen, creating an electrochemical gradient over the inner membrane that drives transmembrane transport and the ATP synthase. Cytochrome c oxidase is the component of the respiratory chain that catalyzes the reduction of oxygen to water. Electrons originating from reduced cytochrome c in the intermembrane space (IMS) are transferred via the dinuclear copper A center (CU(A)) of subunit 2 and heme A of subunit 1 to the active site in subunit 1, a binuclear center (BNC) formed by heme A3 and copper B (CU(B)). The BNC reduces molecular oxygen to 2 water molecules using 4 electrons from cytochrome c in the IMS and 4 protons from the mitochondrial matrix. The sequence is that of Cytochrome c oxidase subunit 7C, mitochondrial (Cox7c) from Rattus norvegicus (Rat).